The primary structure comprises 120 residues: NAD(P)H-quinone oxidoreductase subunit 3, chloroplastic (120 aa).

3 helical membrane passes run 9 to 29, 64 to 84, and 88 to 108; these read IFWAFLIISSVIPILAFLISG, MFALVFVVFDVETVFLYPWAM, and VLGVSVFIEALIFVLIPIVGS.

It belongs to the complex I subunit 3 family. As to quaternary structure, NDH is composed of at least 16 different subunits, 5 of which are encoded in the nucleus.

It is found in the plastid. Its subcellular location is the chloroplast thylakoid membrane. It carries out the reaction a plastoquinone + NADH + (n+1) H(+)(in) = a plastoquinol + NAD(+) + n H(+)(out). The catalysed reaction is a plastoquinone + NADPH + (n+1) H(+)(in) = a plastoquinol + NADP(+) + n H(+)(out). NDH shuttles electrons from NAD(P)H:plastoquinone, via FMN and iron-sulfur (Fe-S) centers, to quinones in the photosynthetic chain and possibly in a chloroplast respiratory chain. The immediate electron acceptor for the enzyme in this species is believed to be plastoquinone. Couples the redox reaction to proton translocation, and thus conserves the redox energy in a proton gradient. This chain is NAD(P)H-quinone oxidoreductase subunit 3, chloroplastic, found in Liriodendron tulipifera (Tuliptree).